The sequence spans 435 residues: S-phase entry cyclin-5 (435 aa).

2 disordered regions span residues 36–70 and 104–126; these read KRAL…NPLS and NDRT…DAAS. Residues 41–52 show a composition bias toward low complexity; the sequence is KNDSSSKQQVQD. The span at 110-124 shows a compositional bias: acidic residues; that stretch reads EQEEEEEEEGEDDDA.

This sequence belongs to the cyclin family. Cyclin AB subfamily.

Functionally, required for efficient progression through S phase and possibly for the normal progression through meiosis. Interacts with CDC28. The chain is S-phase entry cyclin-5 (CLB5) from Saccharomyces cerevisiae (strain ATCC 204508 / S288c) (Baker's yeast).